Reading from the N-terminus, the 314-residue chain is BTB/POZ domain-containing protein KCTD17 (314 aa).

In terms of domain architecture, BTB spans 24–94 (KWVRLNVGGT…LRHGKLVLDK (71 aa)). Residues 190–268 (STPNGLSSES…PAGGSRPHPL (79 aa)) form a disordered region. The stretch at 196 to 239 (SSESSRKTKSTEEQLEEQQQQEEEVEEVEVEQVQVEADAQEKAQ) forms a coiled coil. A compositionally biased stretch (acidic residues) spans 208–225 (EQLEEQQQQEEEVEEVEV).

As to quaternary structure, homopentamer; forms a closed pentamer. Interacts with CUL3; interaction is direct and forms a 5:5 heterodecamer. Interacts with TCHP. Interacts with CUL3, as part of the BCR(KCTD17) E3 ubiquitin ligase complex, at least composed of CUL3, KCTD17 and RBX1. Highly expressed in brain. Highest expression is observed in the putamen and the thalamus.

The protein resides in the cytoplasm. In terms of biological role, substrate-adapter for CUL3-RING ubiquitin ligase complexes which mediates the ubiquitination and subsequent proteasomal degradation of TCHP, a protein involved in ciliogenesis down-regulation. Thereby, positively regulates ciliogenesis, playing a crucial role in the initial steps of axoneme extension. May also play a role in endoplasmic reticulum calcium ion homeostasis. The polypeptide is BTB/POZ domain-containing protein KCTD17 (Homo sapiens (Human)).